The primary structure comprises 357 residues: Peptide chain release factor 1 (357 aa).

The residue at position 233 (glutamine 233) is an N5-methylglutamine.

Belongs to the prokaryotic/mitochondrial release factor family. In terms of processing, methylated by PrmC. Methylation increases the termination efficiency of RF1.

The protein localises to the cytoplasm. Functionally, peptide chain release factor 1 directs the termination of translation in response to the peptide chain termination codons UAG and UAA. The chain is Peptide chain release factor 1 from Leuconostoc citreum (strain KM20).